The following is a 247-amino-acid chain: MYTLVLLRHGQSLWNLENKFTGWIDVDLSDQGKEEAKNAGKAMLEAGITPKAAFTSYLRRAINTLNIALDTMNLHYIDVFKSWRLNERHYGALQGLNKKEMVKIHGEEQVNIWRRNYDVPPPPLPKDDPNHPCNDPRYKHIRCQDLPSSESLKDTLERTLPYFQDFIAPTLFQRGCVLVAAHGNSLRAIVKYIEDLSKDEIVKLNIPTGIPLVYVVDDNLNIKSKRYLADEETLKKAIESVANQTKA.

Substrate-binding positions include 8 to 15 (RHGQSLWN), 21 to 22 (TG), Arg-60, 87 to 90 (ERHY), Lys-98, 114 to 115 (RR), and 183 to 184 (GN). The Tele-phosphohistidine intermediate role is filled by His-9. The active-site Proton donor/acceptor is Glu-87.

It belongs to the phosphoglycerate mutase family. BPG-dependent PGAM subfamily.

It carries out the reaction (2R)-2-phosphoglycerate = (2R)-3-phosphoglycerate. The protein operates within carbohydrate degradation; glycolysis; pyruvate from D-glyceraldehyde 3-phosphate: step 3/5. In terms of biological role, catalyzes the interconversion of 2-phosphoglycerate and 3-phosphoglycerate. This Hydrogenobaculum sp. (strain Y04AAS1) protein is 2,3-bisphosphoglycerate-dependent phosphoglycerate mutase.